We begin with the raw amino-acid sequence, 865 residues long: Envelope glycoprotein B (865 aa).

An N-terminal signal peptide occupies residues 1–21; sequence MHYFRRNCIFFLIVILYGTNS. Over 22–731 the chain is Virion surface; it reads SPSTQNVTSR…SGVSAFMSNP (710 aa). N-linked (GlcNAc...) asparagine; by host glycosylation is present at N27. 5 disulfide bridges follow: C49–C530, C66–C486, C140–C204, C298–C346, and C553–C590. The involved in fusion and/or binding to host membrane stretch occupies residues 106-112; that stretch reads TWTGTTY. N-linked (GlcNAc...) asparagine; by host glycosylation is present at N184. Positions 191–198 are involved in fusion and/or binding to host membrane; that stretch reads GSPWIYRT. N-linked (GlcNAc...) asparagine; by host glycosylation is found at N332, N364, N406, and N425. An N-linked (GlcNAc...) asparagine; by host glycan is attached at N631. Hydrophobic membrane proximal region regions lie at residues 676–729 and 683–729; these read INKV…AFMS and DTNY…AFMS. Residues 732–752 form a helical membrane-spanning segment; it reads FGALAIGLIIIAGLVAAFLAY. The Intravirion portion of the chain corresponds to 753–865; sequence RYVNKLKSNP…TYSDSEDDAV (113 aa). Residues 809-812 carry the Golgi targeting motif; sequence YMAL. The segment at 843-865 is disordered; sequence IKNSNPKYDKLPTTYSDSEDDAV. The Internalization motif motif lies at 850–853; sequence YDKL.

It belongs to the herpesviridae glycoprotein B family. As to quaternary structure, homotrimer; disulfide-linked. Binds to heparan sulfate proteoglycans. Interacts with gH/gL heterodimer. A proteolytic cleavage by host furin generates two subunits that remain linked by disulfide bonds.

Its subcellular location is the virion membrane. The protein resides in the host cell membrane. It localises to the host endosome membrane. It is found in the host Golgi apparatus membrane. Its function is as follows. Envelope glycoprotein that forms spikes at the surface of virion envelope. Essential for the initial attachment to heparan sulfate moieties of the host cell surface proteoglycans. Involved in fusion of viral and cellular membranes leading to virus entry into the host cell. Following initial binding to its host receptors, membrane fusion is mediated by the fusion machinery composed at least of gB and the heterodimer gH/gL. May be involved in the fusion between the virion envelope and the outer nuclear membrane during virion egress. The chain is Envelope glycoprotein B from Gallid herpesvirus 2 (strain Chicken/Md5/ATCC VR-987) (GaHV-2).